The chain runs to 270 residues: uncharacterized protein (270 aa).

Residues 1–22 (MEYIKKIALYMSVLLLIIFIGG) form the signal peptide. Cys-23 carries the N-palmitoyl cysteine lipid modification. The S-diacylglycerol cysteine moiety is linked to residue Cys-23.

It belongs to the staphylococcal tandem lipoprotein family.

The protein localises to the cell membrane. This is an uncharacterized protein from Staphylococcus aureus (strain USA300).